Reading from the N-terminus, the 506-residue chain is 2-isopropylmalate synthase (506 aa).

A Pyruvate carboxyltransferase domain is found at 4-266; sequence ILFMDTTLRD…QSSIILKEIK (263 aa). The Mn(2+) site is built by aspartate 13, histidine 201, histidine 203, and asparagine 237. The segment at 390-506 is regulatory domain; that stretch reads NIKQLQVHFV…KLKALLTLVK (117 aa).

It belongs to the alpha-IPM synthase/homocitrate synthase family. LeuA type 1 subfamily. Homodimer. Mn(2+) is required as a cofactor.

Its subcellular location is the cytoplasm. It catalyses the reaction 3-methyl-2-oxobutanoate + acetyl-CoA + H2O = (2S)-2-isopropylmalate + CoA + H(+). Its pathway is amino-acid biosynthesis; L-leucine biosynthesis; L-leucine from 3-methyl-2-oxobutanoate: step 1/4. Catalyzes the condensation of the acetyl group of acetyl-CoA with 3-methyl-2-oxobutanoate (2-ketoisovalerate) to form 3-carboxy-3-hydroxy-4-methylpentanoate (2-isopropylmalate). The protein is 2-isopropylmalate synthase of Bacillus cytotoxicus (strain DSM 22905 / CIP 110041 / 391-98 / NVH 391-98).